A 315-amino-acid polypeptide reads, in one-letter code: Bifunctional protein FolD (315 aa).

NADP(+)-binding positions include 166–168 (GRS), Ser-193, and Ile-234.

This sequence belongs to the tetrahydrofolate dehydrogenase/cyclohydrolase family. As to quaternary structure, homodimer.

It catalyses the reaction (6R)-5,10-methylene-5,6,7,8-tetrahydrofolate + NADP(+) = (6R)-5,10-methenyltetrahydrofolate + NADPH. It carries out the reaction (6R)-5,10-methenyltetrahydrofolate + H2O = (6R)-10-formyltetrahydrofolate + H(+). It participates in one-carbon metabolism; tetrahydrofolate interconversion. Catalyzes the oxidation of 5,10-methylenetetrahydrofolate to 5,10-methenyltetrahydrofolate and then the hydrolysis of 5,10-methenyltetrahydrofolate to 10-formyltetrahydrofolate. This is Bifunctional protein FolD from Treponema pallidum (strain Nichols).